Reading from the N-terminus, the 1322-residue chain is Centrosome-associated protein Alms1a (1322 aa).

Disordered regions lie at residues 1–26 (MRAKRGAVGKVMMSGSRHNKLAESSR), 53–135 (TASS…SEVT), 165–193 (SQSAEDIRTPTKSPQMQNKKTQTPESVLK), 252–442 (EEPS…NSVY), 464–614 (KHNQ…GSRP), 657–752 (ESST…ASTD), 814–844 (SKSQKKANTESATAAQIPSSMRCMGDQKERP), 856–911 (AEAE…LNQR), and 1083–1109 (ASATGGAGGSAITRSTTTTTNSSSSMM). Residues 53 to 62 (TASSGASGST) are compositionally biased toward low complexity. Residues 78–111 (MEHESRPESGHRRRTKSSDHRSPDERGEAKEQLR) are compositionally biased toward basic and acidic residues. Polar residues predominate over residues 165–189 (SQSAEDIRTPTKSPQMQNKKTQTPE). The span at 279-292 (SLNSGMESSLSSNK) shows a compositional bias: low complexity. Over residues 309 to 318 (EVSSCQTDCR) the composition is skewed to polar residues. The segment covering 319 to 330 (SSSQKESTQGSS) has biased composition (low complexity). Residues 338-350 (NFTTEGTQCSYNR) are compositionally biased toward polar residues. A compositionally biased stretch (acidic residues) spans 354-364 (EIDSIMEEEES). Composition is skewed to basic and acidic residues over residues 365 to 375 (IDRRKKDDLRI) and 394 to 408 (SRRESLSSYRRDDSR). The span at 409 to 430 (LNSPNSSRLGSEVSSRVESSRS) shows a compositional bias: low complexity. Composition is skewed to basic and acidic residues over residues 464 to 487 (KHNQRRQQEMEVEPKKQLEKEQHQ), 495 to 512 (PKGRELKDKNHHSGREQQ), and 519 to 538 (RDQRKAEQRHEKDHQLEREQ). Composition is skewed to low complexity over residues 594–605 (STGVTASTSTTS) and 657–669 (ESSTSSRSLSSSS). Polar residues predominate over residues 678–696 (GSLQQVAATNTNQSNARSS). Over residues 714 to 735 (AIGSSSPLPESVSYSGSTSGSG) the composition is skewed to low complexity. 2 stretches are compositionally biased toward polar residues: residues 737–751 (VITQKTNIPNRNAST) and 822–832 (TESATAAQIPS). The segment covering 893–907 (LPAPPPTQPPPPPPH) has biased composition (pro residues). The segment covering 1092 to 1107 (SAITRSTTTTTNSSSS) has biased composition (low complexity). The segment at 1115 to 1322 (MSVPMGMMNT…ISLNHSMAIM (208 aa)) is interaction with Klp10A. The ALMS motif stretch occupies residues 1190 to 1309 (SLQDQLQLAR…FNKRLKSRVA (120 aa)).

It belongs to the ALMS1 family. As to quaternary structure, interacts (via C-terminus) with Klp10A. Interacts with SAK. Expressed in all germlines, including germline stem cells and spermatogonia.

It is found in the cytoplasm. The protein localises to the cytoskeleton. The protein resides in the microtubule organizing center. It localises to the centrosome. Its subcellular location is the centriole. Its function is as follows. In asymmetrically dividing germline stem cells (GSCs), plays a critical role in ensuring centrosome duplication, which is essential for the production of centrosomes and centrioles in all downstream germ cells. Might recruit SAK for daughter centriole duplication. This is Centrosome-associated protein Alms1a from Drosophila melanogaster (Fruit fly).